Consider the following 617-residue polypeptide: MNKETRFPEHFDIPLFLKNLPNLPGVYRFFNESGNVLYVGKAVNLKRRVSGYFQKNDHSPRIALMVKQVHHIETTITRSESEALILENNFIKALSPKYNILFRDDKSYPYLMLSGHQYPQMAYYRGTLKKPNQYFGPYPNSNAVRDSIQVLQKVFMLRTCEDSVFEHRDRPCLLYQIKRCTAPCVGHISEEDYRDSVREAATFLNGKTDELTRTLQHKMQTAAANLQFEEAARYRDQIQALGIMQSNQFIDSKNPNNPNDIDLLALAVSDGLVCVHWVSIRGGRHVGDKSFFPDTKNDPEPNGQDYAEAFVAQHYLGKSKPDIIISNFPVPDALKEALEGEHGKQMQFVTKTIGERKVRLKMAEQNAQMAIAQRRLQQSSQQHRIDELAKILGMDSDGLNRLECFDISHTQGEATIASCVVYDEQNIQPSQYRRYNITTAKPGDDYAAMREVLTRRYGKMQEAEANGETVKWPDAVLIDGGKGQIGVAVSVWEELGLHIPLVGIAKGPERKAGMEELILPFTGEVFRLPPNSPALHLLQTVRDESHRFAITGHRKKRDKARVTSSLSDIPGVGSKRRQALLTRFGGLRGVIAASREDLEKVEGISKALAETIYNHLH.

The 79-residue stretch at 22-100 (NLPGVYRFFN…IKALSPKYNI (79 aa)) folds into the GIY-YIG domain. Residues 209-244 (DELTRTLQHKMQTAAANLQFEEAARYRDQIQALGIM) form the UVR domain.

Belongs to the UvrC family. As to quaternary structure, interacts with UvrB in an incision complex.

It localises to the cytoplasm. Its function is as follows. The UvrABC repair system catalyzes the recognition and processing of DNA lesions. UvrC both incises the 5' and 3' sides of the lesion. The N-terminal half is responsible for the 3' incision and the C-terminal half is responsible for the 5' incision. The polypeptide is UvrABC system protein C (Neisseria meningitidis serogroup B (strain ATCC BAA-335 / MC58)).